A 465-amino-acid polypeptide reads, in one-letter code: Cysteine--tRNA ligase (465 aa).

Cys-29 contacts Zn(2+). The 'HIGH' region motif lies at 31-41 (PTVYNYIHIGN). The Zn(2+) site is built by Cys-209, His-234, and Glu-238. The short motif at 266–270 (KMSKS) is the 'KMSKS' region element. Lys-269 lines the ATP pocket. Position 270 is a phosphoserine (Ser-270).

The protein belongs to the class-I aminoacyl-tRNA synthetase family. Monomer. Zn(2+) serves as cofactor.

The protein localises to the cytoplasm. It catalyses the reaction tRNA(Cys) + L-cysteine + ATP = L-cysteinyl-tRNA(Cys) + AMP + diphosphate. The protein is Cysteine--tRNA ligase of Bacillus thuringiensis (strain Al Hakam).